The chain runs to 507 residues: Fatty acid resistance protein FarB (507 aa).

Transmembrane regions (helical) follow at residues 8-28 (GAAL…EVLD), 52-72 (WVIT…GFLA), 78-98 (VKLF…CGIA), 109-129 (ILQG…LMAS), 136-156 (MLAL…GPIL), 164-184 (WHWG…AWIT), 199-219 (PTDY…QMML), 233-253 (IITL…WELG), 274-294 (IATS…PLVL), 303-323 (AWAG…SPLI), 334-354 (LLVT…TDFY), 363-383 (IWPQ…LTTI), 399-419 (LSNF…STLW), and 478-498 (IFLA…LAKP).

This sequence belongs to the major facilitator superfamily. EmrB family. As to quaternary structure, probably part of a tripartite efflux system FarAB-MtrE, which is composed of an inner membrane transporter, FarB, a periplasmic membrane fusion protein, FarA, and an outer membrane component, MtrE.

It is found in the cell inner membrane. Its function is as follows. Mediates resistance to long-chained antibacterial fatty acids (FAs). Function is dependent on the MtrE outer membrane protein. In Neisseria gonorrhoeae, this protein is Fatty acid resistance protein FarB.